A 555-amino-acid chain; its full sequence is Beta-fructofuranosidase, cell wall isozyme (555 aa).

A signal peptide spans 1 to 22 (MAISSIFLLSLFSLIYVIPIEA). Residues 58 to 61 (WIND), Gln77, Trp85, and 120 to 121 (WS) contribute to the substrate site. Asp61 is an active-site residue. Asp140 is an active-site residue. N-linked (GlcNAc...) asparagine glycosylation is found at Asn154 and Asn181. Residues 186-187 (RD), Glu241, and Asp277 each bind substrate. Asn337 carries N-linked (GlcNAc...) asparagine glycosylation. A disulfide bond links Cys435 and Cys481.

It belongs to the glycosyl hydrolase 32 family.

The enzyme catalyses Hydrolysis of terminal non-reducing beta-D-fructofuranoside residues in beta-D-fructofuranosides.. In Pisum sativum (Garden pea), this protein is Beta-fructofuranosidase, cell wall isozyme (BFRUCT1).